The following is an 856-amino-acid chain: MTKKAKRNIVHKRFDSIVKGSQDTKKYRGLELTNGLRVLLVSDSKTRVSAVALDVKVGHLMDPWELPGLAHFCEHMLFLGTAKYPSEREYFKYLAANNGDSNAYTDTDHTNYSFEVRSEKLYGALDRFAQFFLDPQFTESATEREVCAVNCEYLDKVNEDFWRCLQVERSLSKPGHDYSKFAIGNKKTLLEDPRTKGIEPRDVLLDFYKNWYSSDIMTCCIVGKESLDVLESYLGSFKFDAIKNTRKERKIWKDSPFGPDQLAKRIEIVPIQNTGQVSIKFPFPDLNGEFLSQPGDYIAHLIGHEGPGSLLSELKRLGWVISLEADNHTIASGFGVFSVTMDLSTEGLEHVDDVIQLVFNFIGFLKSSGPQKWIHDELAELNAVDFRFDDVKHTMEKASILAECLHPKIRKNFETALKTSHHAFNLPEKNEYIPSKFDQKPREPVKSGYPRLISEDEWIQVWFKQDNEYNSPKQGIMFALTTPLVAKKSKNVVAFKSLDTIIEETYNARLAGLECQFESSSSGVQIRVFGYDEKQSLFAKHLVNRMANFQVNRLCFDISFESLKRTLTNHAFSQPHDLSAHFIDLLVVDNIWSKEQLLAVCDSVTLEDVHGFAIKMLQAFHMELFVHGNSTEKDTLQLSKELSDILKSVAPNSRPLKRDEHNPHRELQLINGHEHVYRHFQKTHDVGCVEVAFQIGVQSTYNNSVNKLLNELIKNPAYTILRTNEALGYNVSTESRLNDGNVYLHVIVQGPESADHVLERIEVFLESAREEIVAMPQEDFDYQVWAMFKENPPTLSQCFSMFWSEIHSRQYNFGRNKEVRGISKRITKEEVINFFDRKIRKGGAERRKLALGLWKK.

H71 contributes to the Zn(2+) binding site. E74 serves as the catalytic Proton acceptor. Residues H75 and E152 each contribute to the Zn(2+) site.

This sequence belongs to the peptidase M16 family.

The polypeptide is Putative zinc protease C28F5.4 (Caenorhabditis elegans).